The following is a 122-amino-acid chain: Large ribosomal subunit protein uL14 (122 aa).

It belongs to the universal ribosomal protein uL14 family. Part of the 50S ribosomal subunit. Forms a cluster with proteins L3 and L19. In the 70S ribosome, L14 and L19 interact and together make contacts with the 16S rRNA in bridges B5 and B8.

Its function is as follows. Binds to 23S rRNA. Forms part of two intersubunit bridges in the 70S ribosome. The sequence is that of Large ribosomal subunit protein uL14 from Rhodospirillum rubrum (strain ATCC 11170 / ATH 1.1.1 / DSM 467 / LMG 4362 / NCIMB 8255 / S1).